Reading from the N-terminus, the 219-residue chain is Claudin-3 (219 aa).

The Cytoplasmic portion of the chain corresponds to 1-8 (MSMGLEIT). A helical membrane pass occupies residues 9–29 (GTSLAVLGWLCTIVCCALPMW). At 30 to 80 (RVSAFIGSSIITAQITWEGLWMNCVVQSTGQMQCKMYDSLLALPQDLQAAR) the chain is on the extracellular side. The chain crosses the membrane as a helical span at residues 81–101 (ALIVVSILLAAFGLLVALVGA). The Cytoplasmic segment spans residues 102–115 (QCTNCVQDETAKAK). The chain crosses the membrane as a helical span at residues 116-136 (ITIVAGVLFLLAALLTLVPVS). The Extracellular segment spans residues 137–159 (WSANTIIRDFYNPLVPEAQKREM). A helical transmembrane segment spans residues 160-180 (GAGLYVGWAAAALQLLGGALL). Over 181 to 219 (CCSCPPRDKYAPTKILYSAPRSTGPGTGTGTAYDRKDYV) the chain is Cytoplasmic. Tyr197 is subject to Phosphotyrosine. Ser198 bears the Phosphoserine mark. An interactions with TJP1, TJP2 and TJP3 region spans residues 218–219 (YV).

The protein belongs to the claudin family. Can form homo- and heteropolymers with other CLDN. Homopolymers interact with CLDN1 and CLDN2 homopolymers. Interacts in cis (within the same plasma membrane) with CLDN19. Directly interacts with TJP1/ZO-1, TJP2/ZO-2 and TJP3/ZO-3. In terms of assembly, (Microbial infection) Interacts with Clostridium perfringens enterotoxin CPE; the interaction may disrupt claudin assembly in tight junctions. In terms of tissue distribution, expressed in the lung. Expressed at high levels in the liver and at lower levels, in kidney and testis.

It localises to the cell junction. The protein localises to the tight junction. It is found in the cell membrane. Its function is as follows. Plays a major role in tight junction-specific obliteration of the intercellular space, through calcium-independent cell-adhesion activity. In Mus musculus (Mouse), this protein is Claudin-3 (Cldn3).